We begin with the raw amino-acid sequence, 311 residues long: Porphobilinogen deaminase (311 aa).

Residue Cys-241 is modified to S-(dipyrrolylmethanemethyl)cysteine.

The protein belongs to the HMBS family. In terms of assembly, monomer. Requires dipyrromethane as cofactor.

It carries out the reaction 4 porphobilinogen + H2O = hydroxymethylbilane + 4 NH4(+). The protein operates within porphyrin-containing compound metabolism; protoporphyrin-IX biosynthesis; coproporphyrinogen-III from 5-aminolevulinate: step 2/4. In terms of biological role, tetrapolymerization of the monopyrrole PBG into the hydroxymethylbilane pre-uroporphyrinogen in several discrete steps. The protein is Porphobilinogen deaminase of Bacillus pumilus (strain SAFR-032).